Reading from the N-terminus, the 347-residue chain is Heat-inducible transcription repressor HrcA (347 aa).

This sequence belongs to the HrcA family.

In terms of biological role, negative regulator of class I heat shock genes (grpE-dnaK-dnaJ and groELS operons). Prevents heat-shock induction of these operons. This is Heat-inducible transcription repressor HrcA from Sphingopyxis alaskensis (strain DSM 13593 / LMG 18877 / RB2256) (Sphingomonas alaskensis).